The sequence spans 129 residues: Glycine cleavage system H protein (129 aa).

The Lipoyl-binding domain maps to 24–106 (LLKIGVSEFA…IGNGWLLIIK (83 aa)). An N6-lipoyllysine modification is found at Lys-65.

Belongs to the GcvH family. The glycine cleavage system is composed of four proteins: P, T, L and H. It depends on (R)-lipoate as a cofactor.

Functionally, the glycine cleavage system catalyzes the degradation of glycine. The H protein shuttles the methylamine group of glycine from the P protein to the T protein. The chain is Glycine cleavage system H protein from Prochlorococcus marinus (strain MIT 9515).